The following is a 273-amino-acid chain: Octanoyltransferase LipM (273 aa).

A BPL/LPL catalytic domain is found at 33–244 (GKTPPTLRFY…AFTRLYAVEF (212 aa)). Catalysis depends on Cys-146, which acts as the Acyl-thioester intermediate.

Belongs to the octanoyltransferase LipM family. As to quaternary structure, monomer.

The catalysed reaction is octanoyl-[ACP] + L-lysyl-[protein] = N(6)-octanoyl-L-lysyl-[protein] + holo-[ACP] + H(+). It functions in the pathway protein modification; protein lipoylation via endogenous pathway; protein N(6)-(lipoyl)lysine from octanoyl-[acyl-carrier-protein]. Functionally, catalyzes the transfer of endogenously produced octanoic acid from octanoyl-acyl-carrier-protein onto the lipoyl domain of GcvH, an intermediate carrier during protein lipoylation. The chain is Octanoyltransferase LipM from Moorella thermoacetica (strain ATCC 39073 / JCM 9320).